The primary structure comprises 182 residues: ATP-dependent protease subunit HslV (182 aa).

Thr2 is an active-site residue. Na(+) is bound by residues Gly157, Cys160, and Thr163.

This sequence belongs to the peptidase T1B family. HslV subfamily. In terms of assembly, a double ring-shaped homohexamer of HslV is capped on each side by a ring-shaped HslU homohexamer. The assembly of the HslU/HslV complex is dependent on binding of ATP.

The protein localises to the cytoplasm. The enzyme catalyses ATP-dependent cleavage of peptide bonds with broad specificity.. Allosterically activated by HslU binding. Its function is as follows. Protease subunit of a proteasome-like degradation complex believed to be a general protein degrading machinery. The polypeptide is ATP-dependent protease subunit HslV (Sodalis glossinidius (strain morsitans)).